The following is a 352-amino-acid chain: MNGTEGPFFYIPMVNTTGIVRSPYEYPQYYLVNPAAYAALGAYMFFLILTGFPINFLTLYVTLEHKKLRTALNLILLNLAVADLFMVFGGFTTTMYTSMHGYFVLGRLGCNVEGFFATLGGEIALWSLVVLAVERWVVVCKPISNFRFTENHAIMGVAFSWIMAATCAVPPLVGWSRYIPEGMQCSCGVDYYTRAEGFNNESFVIYMFIVHFLAPLIVIFFCYGRLLCAVKEAAAAQQESETTQRAEREVTRMVIIMVIGFLTSWLPYASVAWYIFTHQGTEFGPLFMTIPAFFAKSSALYNPMIYICMNKQFRHCMITTLCCGKNPFEEEEGASTTKTEASSVSSSSVSPA.

Residues 1-36 (MNGTEGPFFYIPMVNTTGIVRSPYEYPQYYLVNPAA) lie on the Extracellular side of the membrane. 2 N-linked (GlcNAc...) asparagine glycosylation sites follow: N2 and N15. A helical membrane pass occupies residues 37–61 (YAALGAYMFFLILTGFPINFLTLYV). The Cytoplasmic portion of the chain corresponds to 62–73 (TLEHKKLRTALN). A helical membrane pass occupies residues 74-96 (LILLNLAVADLFMVFGGFTTTMY). Residues 97-110 (TSMHGYFVLGRLGC) lie on the Extracellular side of the membrane. A disulfide bridge connects residues C110 and C187. Residues 111 to 133 (NVEGFFATLGGEIALWSLVVLAV) form a helical membrane-spanning segment. Residues 134–136 (ERW) carry the 'Ionic lock' involved in activated form stabilization motif. At 134-152 (ERWVVVCKPISNFRFTENH) the chain is on the cytoplasmic side. A helical membrane pass occupies residues 153-173 (AIMGVAFSWIMAATCAVPPLV). Residues 174–202 (GWSRYIPEGMQCSCGVDYYTRAEGFNNES) lie on the Extracellular side of the membrane. A helical membrane pass occupies residues 203-224 (FVIYMFIVHFLAPLIVIFFCYG). At 225–252 (RLLCAVKEAAAAQQESETTQRAEREVTR) the chain is on the cytoplasmic side. Residues 253–274 (MVIIMVIGFLTSWLPYASVAWY) form a helical membrane-spanning segment. The Extracellular segment spans residues 275 to 286 (IFTHQGTEFGPL). A helical membrane pass occupies residues 287–308 (FMTIPAFFAKSSALYNPMIYIC). K296 is modified (N6-(retinylidene)lysine). Over 309-352 (MNKQFRHCMITTLCCGKNPFEEEEGASTTKTEASSVSSSSVSPA) the chain is Cytoplasmic. S-palmitoyl cysteine attachment occurs at residues C322 and C323. The tract at residues 331–352 (EEGASTTKTEASSVSSSSVSPA) is disordered. The span at 342–352 (SSVSSSSVSPA) shows a compositional bias: low complexity.

It belongs to the G-protein coupled receptor 1 family. Opsin subfamily. Post-translationally, phosphorylated on some or all of the serine and threonine residues present in the C-terminal region. In terms of processing, contains one covalently linked retinal chromophore.

Its subcellular location is the membrane. The protein resides in the cell projection. It is found in the cilium. The protein localises to the photoreceptor outer segment. Photoreceptor required for image-forming vision at low light intensity. While most salt water fish species use retinal as chromophore, most freshwater fish use 3-dehydroretinal, or a mixture of retinal and 3-dehydroretinal. Light-induced isomerization of 11-cis to all-trans retinal triggers a conformational change that activates signaling via G-proteins. Subsequent receptor phosphorylation mediates displacement of the bound G-protein alpha subunit by arrestin and terminates signaling. This Pomatoschistus minutus (Sand goby) protein is Rhodopsin (rho).